We begin with the raw amino-acid sequence, 329 residues long: GTP 3',8-cyclase (329 aa).

The Radical SAM core domain maps to A8 to A234. R17 contacts GTP. 2 residues coordinate [4Fe-4S] cluster: C24 and C28. Y30 contacts S-adenosyl-L-methionine. C31 serves as a coordination point for [4Fe-4S] cluster. A GTP-binding site is contributed by R68. G72 serves as a coordination point for S-adenosyl-L-methionine. A GTP-binding site is contributed by T99. S123 is a binding site for S-adenosyl-L-methionine. Position 160 (K160) interacts with GTP. S-adenosyl-L-methionine is bound at residue M194. [4Fe-4S] cluster is bound by residues C257 and C260. R262–R264 lines the GTP pocket. C274 contacts [4Fe-4S] cluster.

It belongs to the radical SAM superfamily. MoaA family. In terms of assembly, monomer and homodimer. [4Fe-4S] cluster is required as a cofactor.

It catalyses the reaction GTP + AH2 + S-adenosyl-L-methionine = (8S)-3',8-cyclo-7,8-dihydroguanosine 5'-triphosphate + 5'-deoxyadenosine + L-methionine + A + H(+). Its pathway is cofactor biosynthesis; molybdopterin biosynthesis. Functionally, catalyzes the cyclization of GTP to (8S)-3',8-cyclo-7,8-dihydroguanosine 5'-triphosphate. The chain is GTP 3',8-cyclase from Escherichia coli (strain K12 / MC4100 / BW2952).